Consider the following 112-residue polypeptide: MGVEKQIIRAGTGPNPSRGQNVTVHCTGYGKNGDLSQKFWSTKDPGQNPFTFKIGQGSVIKGWDEGVLGMQLGEVARLRCSPDYAYGAGGFPAWGIQPNSVLEFEIEVLRAQ.

The tract at residues 1 to 22 (MGVEKQIIRAGTGPNPSRGQNV) is disordered. One can recognise a PPIase FKBP-type domain in the interval 19–112 (GQNVTVHCTG…EFEIEVLRAQ (94 aa)). Residues Cys-26 and Cys-80 are joined by a disulfide bond.

This sequence belongs to the FKBP-type PPIase family. In terms of assembly, interacts with FK506.

The protein localises to the cytoplasm. The enzyme catalyses [protein]-peptidylproline (omega=180) = [protein]-peptidylproline (omega=0). In terms of biological role, PPIases accelerate the folding of proteins. It catalyzes the cis-trans isomerization of proline imidic peptide bonds in oligopeptides. The polypeptide is Peptidyl-prolyl cis-trans isomerase FKBP12 (FKBP12) (Vicia faba (Broad bean)).